The primary structure comprises 308 residues: MSAQKPGLHPRNRHHHRYDLATLCQVTPELAQFLTRTPAGEQSVDFANPLAVKALNKALLAYFYQVANWDIPEGFLCPPVPGRADYIHHLADLLGETTGAIPADASVLDVGTGANCIYPLIGVHEYGWRFTGSEVHAQALASAQVIISGNPGLTRSIRLRRQKDPAAIFNGIIHKNEQYDATLCNPPFHDSAASARAGSERKRRNLGQDKNDALNFGGQQQELWCEGGEVAFIKTMIAESQAFGRQVMWFTTLVSRGENLPPLYRALTDVGAVKVVKKEMAQGQKQSRFIAWTFMDDDQRRRFMARKR.

Residues 190-212 form a disordered region; that stretch reads DSAASARAGSERKRRNLGQDKND.

Belongs to the methyltransferase superfamily. METTL16/RlmF family.

Its subcellular location is the cytoplasm. It catalyses the reaction adenosine(1618) in 23S rRNA + S-adenosyl-L-methionine = N(6)-methyladenosine(1618) in 23S rRNA + S-adenosyl-L-homocysteine + H(+). Its function is as follows. Specifically methylates the adenine in position 1618 of 23S rRNA. The protein is Ribosomal RNA large subunit methyltransferase F of Citrobacter koseri (strain ATCC BAA-895 / CDC 4225-83 / SGSC4696).